The sequence spans 300 residues: Protoheme IX farnesyltransferase (300 aa).

Transmembrane regions (helical) follow at residues 21-43, 45-65, 94-114, 117-137, 145-167, 171-193, 213-233, 235-255, and 272-292; these read PRVV…RGVP, PLSV…AGAF, ASLI…LLFV, LSAL…SIVL, IVWG…TGSI, AIVL…SIHY, LVVL…LLLI, VAHM…WFVY, and AMHI…SVGI.

The protein belongs to the UbiA prenyltransferase family. Protoheme IX farnesyltransferase subfamily.

The protein resides in the cell membrane. It catalyses the reaction heme b + (2E,6E)-farnesyl diphosphate + H2O = Fe(II)-heme o + diphosphate. It participates in porphyrin-containing compound metabolism; heme O biosynthesis; heme O from protoheme: step 1/1. In terms of biological role, converts heme B (protoheme IX) to heme O by substitution of the vinyl group on carbon 2 of heme B porphyrin ring with a hydroxyethyl farnesyl side group. This is Protoheme IX farnesyltransferase from Tropheryma whipplei (strain TW08/27) (Whipple's bacillus).